The sequence spans 359 residues: uncharacterized protein (359 aa).

The signal sequence occupies residues Met1 to Thr15. The N-acetyltransferase domain maps to Ile212–Gln359.

This is an uncharacterized protein from Mycobacterium leprae (strain TN).